The sequence spans 287 residues: Transmembrane protein 71 (287 aa).

The tract at residues 1–25 (MYRDSPLMSTPVANDSRSDEGPSGK) is disordered. Helical transmembrane passes span 218 to 238 (AGLMHKVSFQAILLAVCLVIS) and 244 to 264 (FVGGELASIFTCALLITIAYV).

It belongs to the TMEM71 family.

It localises to the membrane. This Mus musculus (Mouse) protein is Transmembrane protein 71 (Tmem71).